Consider the following 511-residue polypeptide: MMAFRAYIINFVILCILVASTVSGYNQKDVKAWCSQTPNPKPCEYFLTHNSNNEPIKSESEFLKISMKLVLDRAILAKTHAFTLGPKCRDTREKAAWEDCIKLYDLTVSKINETMDPNVKCSKLDAQTWLSTALTNLDTCRAGFLELGVTDIVLPLMSNNVSNLLCNTLAINKVPFNYTPPEKDGFPSWVKPGDRKLLQSSTPKDNAVVAKDGSGNFKTIKEAIDAASGSGRFVIYVKQGVYSENLEIRKKNVMLRGDGIGKTIITGSKSVGGGTTTFNSATVAAVGDGFIARGITFRNTAGASNEQAVALRSGSDLSVFYQCSFEAYQDTLYVHSNRQFYRDCDVYGTVDFIFGNAAAVLQNCNIFARRPRSKTNTITAQGRSDPNQNTGIIIHNSRVTAASDLRPVLGSTKTYLGRPWRQYSRTVFMKTSLDSLIDPRGWLEWDGNFALKTLFYAEFQNTGPGASTSGRVTWPGFRVLGSASEASKFTVGTFLAGGSWIPSSVPFTSGL.

An N-terminal signal peptide occupies residues 1–23; the sequence is MMAFRAYIINFVILCILVASTVS. Positions 24 to 171 are pectinesterase inhibitor 17; it reads GYNQKDVKAW…SNLLCNTLAI (148 aa). Asn112 and Asn160 each carry an N-linked (GlcNAc...) asparagine glycan. The segment at 237-414 is pectinesterase 17; sequence VKQGVYSENL…LRPVLGSTKT (178 aa). The substrate site is built by Thr277 and Gln307. Asp330 acts as the Proton donor; for pectinesterase activity in catalysis. Cys344 and Cys364 are joined by a disulfide. Residue Asp351 is the Nucleophile; for pectinesterase activity of the active site. Substrate is bound by residues Arg418 and Trp420.

This sequence in the N-terminal section; belongs to the PMEI family. It in the C-terminal section; belongs to the pectinesterase family. In terms of tissue distribution, expressed in siliques.

Its subcellular location is the secreted. It localises to the cell wall. The enzyme catalyses [(1-&gt;4)-alpha-D-galacturonosyl methyl ester](n) + n H2O = [(1-&gt;4)-alpha-D-galacturonosyl](n) + n methanol + n H(+). The protein operates within glycan metabolism; pectin degradation; 2-dehydro-3-deoxy-D-gluconate from pectin: step 1/5. Functionally, acts in the modification of cell walls via demethylesterification of cell wall pectin. The protein is Probable pectinesterase/pectinesterase inhibitor 17 (PME17) of Arabidopsis thaliana (Mouse-ear cress).